The chain runs to 397 residues: Oxygen-dependent coproporphyrinogen-III oxidase, chloroplastic (397 aa).

The interval 76 to 95 (ESDMGSNVTSNSSSVRGRFE) is disordered. Polar residues predominate over residues 79-90 (MGSNVTSNSSSV). The interval 135–144 (VLQDGAVFEK) is important for dimerization. Serine 185 lines the substrate pocket. Residue histidine 199 is the Proton donor of the active site. Substrate is bound by residues 201 to 203 (NYR) and 355 to 360 (GGRIES). An important for dimerization region spans residues 337–372 (YVEFNLVYDRGTTFGLKTGGRIESILVSLPLTARWE).

This sequence belongs to the aerobic coproporphyrinogen-III oxidase family. In terms of assembly, homodimer.

Its subcellular location is the plastid. It is found in the chloroplast. It carries out the reaction coproporphyrinogen III + O2 + 2 H(+) = protoporphyrinogen IX + 2 CO2 + 2 H2O. The protein operates within porphyrin-containing compound metabolism; protoporphyrin-IX biosynthesis; protoporphyrinogen-IX from coproporphyrinogen-III (O2 route): step 1/1. Its function is as follows. Involved in the heme and chlorophyll biosynthesis. Catalyzes the aerobic oxidative decarboxylation of propionate groups of rings A and B of coproporphyrinogen-III to yield the vinyl groups in protoporphyrinogen-IX. The chain is Oxygen-dependent coproporphyrinogen-III oxidase, chloroplastic (CPX) from Nicotiana tabacum (Common tobacco).